The chain runs to 354 residues: Guanine nucleotide-binding protein G(i) subunit alpha-3 (354 aa).

Glycine 2 carries N-myristoyl glycine lipidation. Residue cysteine 3 is the site of S-palmitoyl cysteine attachment. One can recognise a G-alpha domain in the interval lysine 32–tyrosine 354. Residues lysine 35–threonine 48 form a G1 motif region. Residues glycine 42, glutamate 43, serine 44, glycine 45, lysine 46, serine 47, threonine 48, aspartate 150, serine 151, leucine 175, arginine 176, threonine 177, arginine 178, valine 179, lysine 180, threonine 181, valine 201, glycine 203, asparagine 269, lysine 270, aspartate 272, leucine 273, cysteine 325, alanine 326, and threonine 327 each contribute to the GTP site. Serine 47 contributes to the Mg(2+) binding site. A G2 motif region spans residues aspartate 173–threonine 181. Threonine 181 serves as a coordination point for Mg(2+). Residues phenylalanine 196 to arginine 205 are G3 motif. Residues isoleucine 265–aspartate 272 form a G4 motif region. A G5 motif region spans residues threonine 324–threonine 329.

It belongs to the G-alpha family. G(i/o/t/z) subfamily. In terms of assembly, heterotrimeric G proteins are composed of 3 units; alpha, beta and gamma. The alpha subunit contains the guanine nucleotide binding site. GTP binding causes dissociation of the heterotrimer, liberating the individual subunits so that they can interact with downstream effector proteins. Forms a complex with CCDC88A/GIV and EGFR which leads to enhanced EGFR signaling and triggering of cell migration; ligand stimulation is required for recruitment of GNAI3 to the complex. Interacts (inactive GDP-bound form) with CCDC88A/GIV (via GBA motif); the interaction leads to activation of GNAI3. Interacts (inactive GDP-bound form) with CCDC88C/DAPLE (via GBA motif); the interaction leads to activation of GNAI3. Interacts (inactive GDP-bound form) with NUCB1 (via GBA motif) and NUCB2 (via GBA motif); the interaction leads to activation of GNAI3. Interacts (inactive GDP-bound form) with PLCD4 (via GBA motif); the interaction leads to activation of GNAI3. Interacts with INSR; the interaction is probably mediated by CCDC88A/GIV. Interacts with GPSM1. Interacts (GDP-bound form) with GPSM2 (via GoLoco domains). Does not interact with RGS2. Interacts with RGS8 and RGS10; this strongly enhances the intrinsic GTPase activity. Interacts with RGS12. Interacts with RGS16; this strongly enhances the intrinsic GTPase activity. Interacts (via active GTP- or inactive GDP-bound form) with RGS14. Interacts (via active GTP-bound form) with TRPC5 (via ANK repeats) in a homotetrameric ion channel; the interaction is direct and activates the channel activity. Ubiquitous.

Its subcellular location is the cytoplasm. The protein resides in the cell membrane. The protein localises to the cytoskeleton. It localises to the microtubule organizing center. It is found in the centrosome. Heterotrimeric guanine nucleotide-binding proteins (G proteins) function as transducers downstream of G protein-coupled receptors (GPCRs) in numerous signaling cascades. The alpha chain contains the guanine nucleotide binding site and alternates between an active, GTP-bound state and an inactive, GDP-bound state. Signaling by an activated GPCR promotes GDP release and GTP binding. The alpha subunit has a low GTPase activity that converts bound GTP to GDP, thereby terminating the signal. Both GDP release and GTP hydrolysis are modulated by numerous regulatory proteins. Signaling is mediated via effector proteins, such as adenylate cyclase. Inhibits adenylate cyclase activity, leading to decreased intracellular cAMP levels. Stimulates the activity of receptor-regulated K(+) channels. The active GTP-bound form prevents the association of RGS14 with centrosomes and is required for the translocation of RGS14 from the cytoplasm to the plasma membrane. May play a role in cell division. The active GTP-bound form activates the calcium permeant TRPC5 ion channels. This is Guanine nucleotide-binding protein G(i) subunit alpha-3 (Gnai3) from Rattus norvegicus (Rat).